The chain runs to 397 residues: Flavohemoprotein (397 aa).

The 137-residue stretch at 4-140 folds into the Globin domain; the sequence is SFSPHTITLI…IANLLKDREA (137 aa). His-87 contributes to the heme b binding site. Active-site charge relay system residues include Tyr-97 and Glu-139. Positions 151–397 are reductase; the sequence is GGWIHWRRFV…FGPMDEEMAA (247 aa). Residues 154–258 form the FAD-binding FR-type domain; that stretch reads IHWRRFVISK…TPPVGDFFLP (105 aa). FAD contacts are provided by residues Tyr-192 and 207 to 210; that span reads RNYS. NADP(+) is bound at residue 271–276; sequence GVGLTP. Residue 387-390 participates in FAD binding; the sequence is FFGP.

Belongs to the globin family. Two-domain flavohemoproteins subfamily. It in the C-terminal section; belongs to the flavoprotein pyridine nucleotide cytochrome reductase family. Heme b is required as a cofactor. The cofactor is FAD.

It carries out the reaction 2 nitric oxide + NADPH + 2 O2 = 2 nitrate + NADP(+) + H(+). The enzyme catalyses 2 nitric oxide + NADH + 2 O2 = 2 nitrate + NAD(+) + H(+). In terms of biological role, is involved in NO detoxification in an aerobic process, termed nitric oxide dioxygenase (NOD) reaction that utilizes O(2) and NAD(P)H to convert NO to nitrate, which protects the bacterium from various noxious nitrogen compounds. Therefore, plays a central role in the inducible response to nitrosative stress. The polypeptide is Flavohemoprotein (Xylella fastidiosa (strain 9a5c)).